The sequence spans 1324 residues: Coiled-coil domain-containing protein 171 (1324 aa).

Coiled-coil stretches lie at residues 29 to 296, 325 to 393, 453 to 521, 599 to 712, and 981 to 1145; these read KNET…RAAH, AEAV…RLQY, FSVV…KCAD, SELC…VREN, and FTQR…KECV. Polar residues predominate over residues 1301-1312; the sequence is PHSLSSQSSPGV. A disordered region spans residues 1301–1324; that stretch reads PHSLSSQSSPGVPTNAKRPSQIGL.

The polypeptide is Coiled-coil domain-containing protein 171 (Ccdc171) (Mus musculus (Mouse)).